A 108-amino-acid polypeptide reads, in one-letter code: Class I hydrophobin 3 (108 aa).

A signal peptide spans 1 to 17 (MFSRVFAVASLAALALA). 4 disulfide bridges follow: Cys26–Cys87, Cys33–Cys81, Cys34–Cys67, and Cys88–Cys101.

It belongs to the fungal hydrophobin family. Self-assembles to form functional amyloid fibrils called rodlets. Self-assembly into fibrillar rodlets occurs spontaneously at hydrophobic:hydrophilic interfaces and the rodlets further associate laterally to form amphipathic monolayers.

The protein resides in the secreted. Its subcellular location is the cell wall. Its function is as follows. Aerial growth, conidiation, and dispersal of filamentous fungi in the environment rely upon a capability of their secreting small amphipathic proteins called hydrophobins (HPBs) with low sequence identity. Class I can self-assemble into an outermost layer of rodlet bundles on aerial cell surfaces, conferring cellular hydrophobicity that supports fungal growth, development and dispersal; whereas Class II form highly ordered films at water-air interfaces through intermolecular interactions but contribute nothing to the rodlet structure. The sequence is that of Class I hydrophobin 3 from Pisolithus tinctorius (Dead man's foot).